We begin with the raw amino-acid sequence, 103 residues long: UPF0235 protein RL4503 (103 aa).

The protein belongs to the UPF0235 family.

The protein is UPF0235 protein RL4503 of Rhizobium johnstonii (strain DSM 114642 / LMG 32736 / 3841) (Rhizobium leguminosarum bv. viciae).